A 146-amino-acid chain; its full sequence is Negative cofactor 2 complex subunit beta (146 aa).

The disordered stretch occupies residues 124-146; that stretch reads FRQSRSRLHHNSVSDPVKSEDSS. Phosphoserine is present on residues Ser-135, Ser-137, and Ser-142.

Component of the NC2 (negative cofactor 2) complex composed of BUR6 and NCB2. The NC2 complex associates with SPT15/TBP. Interacts with SPT15/TBP.

Its subcellular location is the nucleus. Functionally, component of the NC2 complex which represses RNA polymerase II transcription through binding to SPT15/TBP and thereby inhibiting the assembly of the preinitiation complex. The NC2 complex may also mediate transcriptional activation from TATA-driven promoters through association with SPT15/TBP. This chain is Negative cofactor 2 complex subunit beta (NCB2), found in Saccharomyces cerevisiae (strain ATCC 204508 / S288c) (Baker's yeast).